The following is a 342-amino-acid chain: Glycerol-3-phosphate dehydrogenase [NAD(P)+] (342 aa).

The NADPH site is built by serine 13, tryptophan 14, and lysine 108. Sn-glycerol 3-phosphate-binding residues include lysine 108, glycine 139, and serine 141. An NADPH-binding site is contributed by alanine 143. Positions 194, 247, 257, 258, and 259 each coordinate sn-glycerol 3-phosphate. Lysine 194 serves as the catalytic Proton acceptor. Residue arginine 258 participates in NADPH binding. Residues valine 282 and glutamate 284 each contribute to the NADPH site.

Belongs to the NAD-dependent glycerol-3-phosphate dehydrogenase family.

The protein localises to the cytoplasm. It catalyses the reaction sn-glycerol 3-phosphate + NAD(+) = dihydroxyacetone phosphate + NADH + H(+). The enzyme catalyses sn-glycerol 3-phosphate + NADP(+) = dihydroxyacetone phosphate + NADPH + H(+). It functions in the pathway membrane lipid metabolism; glycerophospholipid metabolism. Functionally, catalyzes the reduction of the glycolytic intermediate dihydroxyacetone phosphate (DHAP) to sn-glycerol 3-phosphate (G3P), the key precursor for phospholipid synthesis. The protein is Glycerol-3-phosphate dehydrogenase [NAD(P)+] of Lactococcus lactis subsp. cremoris (strain SK11).